Reading from the N-terminus, the 558-residue chain is Sinalpyl alcohol oxidase Nec3 (558 aa).

The signal sequence occupies residues Met1–Ala28. Residue Thr64 to Ala65 coordinates FAD. The N-linked (GlcNAc...) asparagine glycan is linked to Asn76. FAD-binding positions include Glu83 to Arg84, Val131, Ser135, and Asn139 to Phe142. A glycan (N-linked (GlcNAc...) asparagine) is linked at Asn180. FAD is bound at residue Val247. Residues Asn308, Asn386, and Asn473 are each glycosylated (N-linked (GlcNAc...) asparagine). An intrachain disulfide couples Cys433 to Cys484. Tyr492 to His493 contributes to the FAD binding site. The active-site Proton donor is His493. Asn531 serves as the catalytic Proton acceptor. Pro532 to Gln533 serves as a coordination point for FAD.

The protein belongs to the GMC oxidoreductase family. Monomer. It depends on FAD as a cofactor. In terms of tissue distribution, confined to nectaries.

The catalysed reaction is (E)-sinapyl alcohol + O2 = (E)-sinapaldehyde + H2O2. It functions in the pathway alkaloid biosynthesis. Its function is as follows. Involved in the production of blood-red nectar containing the alkaloid nesocodin and that serves as a visual attractant for pollinator visitation, including vertebrates such as Phelsuma geckos. The nectar is initially acidic and pale yellow, but slowly becomes alkaline before turning into red within 24 hours. Together with NEC1 and NEC2, facilitates the condensation of sinapaldehyde ((E)-3,5-dimethoxy-4-hydroxycinnamaldehyde) and proline to form nesocodin, a pigment with a stable imine bond. Catalyzes the conversion of sinapyl alcohol to sinapaldehyde. This Nesocodon mauritianus (Blue Mauritius bellflower) protein is Sinalpyl alcohol oxidase Nec3.